The following is a 328-amino-acid chain: Ketol-acid reductoisomerase (NADP(+)) (328 aa).

The KARI N-terminal Rossmann domain maps to 1–181 (MKIYYENDID…GLARAGVLET (181 aa)). NADP(+) contacts are provided by residues 24 to 27 (YGSQ), Arg47, Ser52, and 82 to 85 (DEIQ). Residue His107 is part of the active site. Gly133 is a binding site for NADP(+). The KARI C-terminal knotted domain maps to 182 to 327 (TFREETETDL…SKLRKLCGLE (146 aa)). Asp190, Glu194, Glu226, and Glu230 together coordinate Mg(2+). Ser251 contributes to the substrate binding site.

The protein belongs to the ketol-acid reductoisomerase family. The cofactor is Mg(2+).

It carries out the reaction (2R)-2,3-dihydroxy-3-methylbutanoate + NADP(+) = (2S)-2-acetolactate + NADPH + H(+). The enzyme catalyses (2R,3R)-2,3-dihydroxy-3-methylpentanoate + NADP(+) = (S)-2-ethyl-2-hydroxy-3-oxobutanoate + NADPH + H(+). It participates in amino-acid biosynthesis; L-isoleucine biosynthesis; L-isoleucine from 2-oxobutanoate: step 2/4. The protein operates within amino-acid biosynthesis; L-valine biosynthesis; L-valine from pyruvate: step 2/4. Its function is as follows. Involved in the biosynthesis of branched-chain amino acids (BCAA). Catalyzes an alkyl-migration followed by a ketol-acid reduction of (S)-2-acetolactate (S2AL) to yield (R)-2,3-dihydroxy-isovalerate. In the isomerase reaction, S2AL is rearranged via a Mg-dependent methyl migration to produce 3-hydroxy-3-methyl-2-ketobutyrate (HMKB). In the reductase reaction, this 2-ketoacid undergoes a metal-dependent reduction by NADPH to yield (R)-2,3-dihydroxy-isovalerate. The polypeptide is Ketol-acid reductoisomerase (NADP(+)) (Methanothermobacter thermautotrophicus (strain ATCC 29096 / DSM 1053 / JCM 10044 / NBRC 100330 / Delta H) (Methanobacterium thermoautotrophicum)).